The chain runs to 490 residues: Ribulose bisphosphate carboxylase large chain (490 aa).

The substrate site is built by N127 and T177. K179 serves as the catalytic Proton acceptor. K181 provides a ligand contact to substrate. Mg(2+)-binding residues include K205, D207, and E208. Residue K205 is modified to N6-carboxylysine. H297 acts as the Proton acceptor in catalysis. R298, H330, and S382 together coordinate substrate.

The protein belongs to the RuBisCO large chain family. Type I subfamily. In terms of assembly, heterohexadecamer of 8 large chains and 8 small chains. Mg(2+) serves as cofactor.

It is found in the plastid. The protein localises to the chloroplast. It catalyses the reaction 2 (2R)-3-phosphoglycerate + 2 H(+) = D-ribulose 1,5-bisphosphate + CO2 + H2O. The enzyme catalyses D-ribulose 1,5-bisphosphate + O2 = 2-phosphoglycolate + (2R)-3-phosphoglycerate + 2 H(+). Functionally, ruBisCO catalyzes two reactions: the carboxylation of D-ribulose 1,5-bisphosphate, the primary event in carbon dioxide fixation, as well as the oxidative fragmentation of the pentose substrate in the photorespiration process. Both reactions occur simultaneously and in competition at the same active site. The sequence is that of Ribulose bisphosphate carboxylase large chain from Thalassiosira nordenskioeldii (Marine diatom).